Reading from the N-terminus, the 274-residue chain is Transcriptional activator PerA (274 aa).

Residues 168-265 (DRVIKVIELD…NTTPKKYNGV (98 aa)) form the HTH araC/xylS-type domain. 2 DNA-binding regions (H-T-H motif) span residues 185–206 (GDVS…NKEN) and 232–255 (IDEI…KEYY).

Could help in the transcriptional activator of eaeA expression in enteropathogenic E.coli. However, it seems that it is PerC which acts as an activator. This is Transcriptional activator PerA (perA) from Escherichia coli O127:H6 (strain E2348/69 / EPEC).